Reading from the N-terminus, the 143-residue chain is Hemoglobin subunit alpha-1 (143 aa).

N-acetylserine is present on Ser-2. The 142-residue stretch at 2–143 (SLSAKDKATV…LALALCEKYR (142 aa)) folds into the Globin domain. An O2-binding site is contributed by His-60. His-89 is a binding site for heme b.

Belongs to the globin family. As to quaternary structure, hb 1 is a heterotetramer of two alpha-1 and two beta-1 chains. As to expression, red blood cells.

Functionally, involved in oxygen transport from gills to the various peripheral tissues. The protein is Hemoglobin subunit alpha-1 (hba1) of Boreogadus saida (Polar cod).